A 141-amino-acid polypeptide reads, in one-letter code: ATP synthase epsilon chain 1 (141 aa).

This sequence belongs to the ATPase epsilon chain family. F-type ATPases have 2 components, CF(1) - the catalytic core - and CF(0) - the membrane proton channel. CF(1) has five subunits: alpha(3), beta(3), gamma(1), delta(1), epsilon(1). CF(0) has three main subunits: a, b and c.

Its subcellular location is the cell inner membrane. Produces ATP from ADP in the presence of a proton gradient across the membrane. The protein is ATP synthase epsilon chain 1 of Thiobacillus denitrificans (strain ATCC 25259 / T1).